Here is a 514-residue protein sequence, read N- to C-terminus: Na(+)/H(+) antiporter NhaB (514 aa).

Helical transmembrane passes span 23–43 (LALL…PFIA), 63–83 (PLLP…TSAA), 97–117 (LLLM…LFIF), 120–140 (LLLS…AAAF), 144–164 (FLDA…FYGI), 202–222 (LMMH…VGEP), 238–258 (FFLR…LTCM), 303–323 (AVIG…VGLI), 357–377 (LTVF…APII), 391–411 (LFYL…VGTI), 447–467 (ATPN…APLI), and 475–495 (VWMA…CVEF).

It belongs to the NhaB Na(+)/H(+) (TC 2.A.34) antiporter family.

The protein localises to the cell inner membrane. It carries out the reaction 2 Na(+)(in) + 3 H(+)(out) = 2 Na(+)(out) + 3 H(+)(in). Its function is as follows. Na(+)/H(+) antiporter that extrudes sodium in exchange for external protons. This Salmonella gallinarum (strain 287/91 / NCTC 13346) protein is Na(+)/H(+) antiporter NhaB.